Here is a 226-residue protein sequence, read N- to C-terminus: Large ribosomal subunit protein mL67 (226 aa).

Belongs to the mitochondrion-specific ribosomal protein mL67 family. As to quaternary structure, component of the mitochondrial large ribosomal subunit (mt-LSU). Mature yeast 74S mitochondrial ribosomes consist of a small (37S) and a large (54S) subunit. The 37S small subunit contains a 15S ribosomal RNA (15S mt-rRNA) and 34 different proteins. The 54S large subunit contains a 21S rRNA (21S mt-rRNA) and 46 different proteins.

It is found in the nucleus. The protein resides in the mitochondrion. Functionally, component of the mitochondrial ribosome (mitoribosome), a dedicated translation machinery responsible for the synthesis of mitochondrial genome-encoded proteins, including at least some of the essential transmembrane subunits of the mitochondrial respiratory chain. The mitoribosomes are attached to the mitochondrial inner membrane and translation products are cotranslationally integrated into the membrane. mL67/MHR1 also has extraribosomal functions, being involved in regulation of mitochondrial DNA recombination, maintenance and repair, and generation of homoplasmic cells. mL67/MHR1 also acts as transcription factor involved in regulation of RNA polymerase II-dependent transcription. The sequence is that of Large ribosomal subunit protein mL67 (MHR1) from Saccharomyces cerevisiae (strain ATCC 204508 / S288c) (Baker's yeast).